A 362-amino-acid polypeptide reads, in one-letter code: S-adenosylmethionine:tRNA ribosyltransferase-isomerase (362 aa).

Belongs to the QueA family. As to quaternary structure, monomer.

It localises to the cytoplasm. It carries out the reaction 7-aminomethyl-7-carbaguanosine(34) in tRNA + S-adenosyl-L-methionine = epoxyqueuosine(34) in tRNA + adenine + L-methionine + 2 H(+). The protein operates within tRNA modification; tRNA-queuosine biosynthesis. Transfers and isomerizes the ribose moiety from AdoMet to the 7-aminomethyl group of 7-deazaguanine (preQ1-tRNA) to give epoxyqueuosine (oQ-tRNA). This Xanthobacter autotrophicus (strain ATCC BAA-1158 / Py2) protein is S-adenosylmethionine:tRNA ribosyltransferase-isomerase.